Reading from the N-terminus, the 275-residue chain is uncharacterized protein (275 aa).

4 residues coordinate [4Fe-4S] cluster: Cys97, Cys102, Cys136, and Cys140. Cys140 lines the siroheme pocket.

This sequence belongs to the nitrite and sulfite reductase 4Fe-4S domain family.

This is an uncharacterized protein from Methanocaldococcus jannaschii (strain ATCC 43067 / DSM 2661 / JAL-1 / JCM 10045 / NBRC 100440) (Methanococcus jannaschii).